We begin with the raw amino-acid sequence, 226 residues long: X-linked lymphocyte-regulated protein 3A (226 aa).

Positions 1–18 (MSSRERKATDTAGRHSRM) are enriched in basic and acidic residues. Residues 1 to 72 (MSSRERKATD…QDLVQEFEEP (72 aa)) form a disordered region. Positions 21–30 (NLSSDDSQNP) are enriched in polar residues. 2 stretches are compositionally biased toward basic and acidic residues: residues 39 to 48 (EVLDAGREDI) and 56 to 65 (QQARKEKQDL). Positions 155–210 (ETLTLQKNRMEEFKSLCEKYLEKLEVLRDSRGNSIAEELRRLIATLEIKLLMLHNQ) form a coiled coil.

It belongs to the XLR/SYCP3 family. In terms of tissue distribution, expressed in lymphoid cells.

This Mus musculus (Mouse) protein is X-linked lymphocyte-regulated protein 3A (Xlr3a).